We begin with the raw amino-acid sequence, 937 residues long: Glycine dehydrogenase (decarboxylating) (937 aa).

At Lys-686 the chain carries N6-(pyridoxal phosphate)lysine.

Belongs to the GcvP family. As to quaternary structure, the glycine cleavage system is composed of four proteins: P, T, L and H. Pyridoxal 5'-phosphate serves as cofactor.

The catalysed reaction is N(6)-[(R)-lipoyl]-L-lysyl-[glycine-cleavage complex H protein] + glycine + H(+) = N(6)-[(R)-S(8)-aminomethyldihydrolipoyl]-L-lysyl-[glycine-cleavage complex H protein] + CO2. Functionally, the glycine cleavage system catalyzes the degradation of glycine. The P protein binds the alpha-amino group of glycine through its pyridoxal phosphate cofactor; CO(2) is released and the remaining methylamine moiety is then transferred to the lipoamide cofactor of the H protein. The chain is Glycine dehydrogenase (decarboxylating) from Mesorhizobium japonicum (strain LMG 29417 / CECT 9101 / MAFF 303099) (Mesorhizobium loti (strain MAFF 303099)).